Consider the following 160-residue polypeptide: Ribosomal RNA large subunit methyltransferase H (160 aa).

The S-adenosyl-L-methionine site is built by Leu-76 and Gly-108.

Belongs to the RNA methyltransferase RlmH family. Homodimer.

Its subcellular location is the cytoplasm. The catalysed reaction is pseudouridine(1915) in 23S rRNA + S-adenosyl-L-methionine = N(3)-methylpseudouridine(1915) in 23S rRNA + S-adenosyl-L-homocysteine + H(+). Functionally, specifically methylates the pseudouridine at position 1915 (m3Psi1915) in 23S rRNA. The chain is Ribosomal RNA large subunit methyltransferase H from Xanthobacter autotrophicus (strain ATCC BAA-1158 / Py2).